Reading from the N-terminus, the 101-residue chain is Iron-sulfur cluster assembly protein CyaY (101 aa).

The protein belongs to the frataxin family.

Functionally, involved in iron-sulfur (Fe-S) cluster assembly. May act as a regulator of Fe-S biogenesis. The sequence is that of Iron-sulfur cluster assembly protein CyaY from Actinobacillus pleuropneumoniae serotype 5b (strain L20).